Consider the following 424-residue polypeptide: MSVEKAPELRVLSFNCWGLRFVSKYRTERLKAVGEKLAKCDYDIVLLQEVWSIYDFQEIRNLVSCNLVYSRFFHSAAMGAGLAMFSKFPIIESSMNKYPLNGRPQAFWRGDWYVGKGVATASLQHPSGRIISLFNTHLHAPYGKGADTYLCHRLSQAWYISKLLRAAVQRGHIVIAAGDFNIQPLSVPHEIITSYGLVNDAWLSVYPDQVEHPPNRFSMNDKELVEIAGTTCDSRLNTWRENISSKDMDDFVAKRLDYVFHSPSTCEAKNAKVVFLERVPKLDCSYSDHFAIETVLSIKLQPIPVQETRVSYSIIDDTLGITYQYMARERLHMRLRIAHLLISIPLIIGVHVAIAWCDPAWLKVIILFFTVMLTIAAVVNGFCIGLLFGRWEFNGLLEFVAELKEQKLLCKQYLVDHPLPFAKS.

E49 is a Mg(2+) binding site. H289 (proton acceptor) is an active-site residue. Helical transmembrane passes span 335 to 357 and 364 to 386; these read LRIA…IAWC and VIIL…CIGL.

Belongs to the neutral sphingomyelinase family. It depends on Mg(2+) as a cofactor.

It localises to the cell membrane. The protein localises to the endoplasmic reticulum membrane. It participates in lipid metabolism; sphingolipid metabolism. Inositol phosphosphingolipids phospholipase essential for the coordination of cell wall formation. Responsible for the hydrolysis of the phosphosphingolipids (IPS), inositol phosphorylceramide (IPC), mannosylinositol phosphorylceramide (MIPC), and mannosyldiinositol phosphorylceramide (M(IP)2C). This is Inositol phosphosphingolipids phospholipase C (css1) from Schizosaccharomyces pombe (strain 972 / ATCC 24843) (Fission yeast).